The primary structure comprises 168 residues: MPRSRINENFIDKTFSIVANILLRIIPTTSGEKRAFTYYRDGMSAQSEGNYAEALQNYYEAMRLEIDPYDRSYILYNIGLIHTSNGEHTKALEYYFRALERNPFLPQAFNNMAVICHYRGEQAIRQGDSEVAESWFNQAAEYWKQAIALTPGNYIEAQNWLKITGRFE.

TPR repeat units lie at residues Ala35 to Pro68, Ser72 to Leu105, and Gly120 to Asn153.

Belongs to the Ycf3 family.

The protein localises to the plastid. Its subcellular location is the chloroplast thylakoid membrane. Its function is as follows. Essential for the assembly of the photosystem I (PSI) complex. May act as a chaperone-like factor to guide the assembly of the PSI subunits. The sequence is that of Photosystem I assembly protein Ycf3 from Glycine max (Soybean).